The chain runs to 482 residues: Probable glycine dehydrogenase (decarboxylating) subunit 2 (482 aa).

Lys-269 carries the post-translational modification N6-(pyridoxal phosphate)lysine.

Belongs to the GcvP family. C-terminal subunit subfamily. The glycine cleavage system is composed of four proteins: P, T, L and H. In this organism, the P 'protein' is a heterodimer of two subunits. The cofactor is pyridoxal 5'-phosphate.

The enzyme catalyses N(6)-[(R)-lipoyl]-L-lysyl-[glycine-cleavage complex H protein] + glycine + H(+) = N(6)-[(R)-S(8)-aminomethyldihydrolipoyl]-L-lysyl-[glycine-cleavage complex H protein] + CO2. Its function is as follows. The glycine cleavage system catalyzes the degradation of glycine. The P protein binds the alpha-amino group of glycine through its pyridoxal phosphate cofactor; CO(2) is released and the remaining methylamine moiety is then transferred to the lipoamide cofactor of the H protein. The polypeptide is Probable glycine dehydrogenase (decarboxylating) subunit 2 (Pelodictyon phaeoclathratiforme (strain DSM 5477 / BU-1)).